A 308-amino-acid chain; its full sequence is MTITIEQPHLDAIADRKVAGGGGGDNAAELVLDGGFVVPDSNAFGNAFRNYEAESERKETVEEFYRVNHINQTYDFVRRMREEYGRVDKTEMGIWECIELLNEFIDDSDPDLDMPQIEHLLQTAEAIRKDFPDEDWLHLTGLIHDLGKVLLHPSFGELPQWSVVGDTFPVGCAFDECNVHFKYFKENPDYLNPKLNTKFGAYSEGCGLDNVLMSWGHDDYMYLVAKENKTTLPSAGLFIIRYHSFYPLHKHGAYMHLMNDEDKENLKWLRVFNKYDLYSKSNERIDVEKVKPYYMSLIEKYFPAKLRW.

Substrate is bound by residues R49 and 106 to 108; that span reads DDS. Positions 119, 144, and 145 each coordinate Fe cation. Substrate is bound by residues K148 and 165 to 166; that span reads GD. Positions 217, 243, and 276 each coordinate Fe cation. 243-244 serves as a coordination point for substrate; the sequence is HS.

The protein belongs to the myo-inositol oxygenase family. It depends on Fe cation as a cofactor.

It localises to the cytoplasm. The catalysed reaction is myo-inositol + O2 = D-glucuronate + H2O + H(+). Its pathway is polyol metabolism; myo-inositol degradation into D-glucuronate; D-glucuronate from myo-inositol: step 1/1. Its function is as follows. Involved in the biosynthesis of UDP-glucuronic acid (UDP-GlcA), providing nucleotide sugars for cell-wall polymers. May be also involved in plant ascorbate biosynthesis. In Oryza sativa subsp. japonica (Rice), this protein is Probable inositol oxygenase.